A 425-amino-acid chain; its full sequence is uncharacterized protein (425 aa).

Residues 55–181 (RYSHSLGVYE…DLDADRMDYL (127 aa)) form the HD domain.

This is an uncharacterized protein from Mycoplasma pneumoniae (strain ATCC 29342 / M129 / Subtype 1) (Mycoplasmoides pneumoniae).